A 150-amino-acid polypeptide reads, in one-letter code: Ribosome maturation factor RimP (150 aa).

This sequence belongs to the RimP family.

It localises to the cytoplasm. Its function is as follows. Required for maturation of 30S ribosomal subunits. In Acaryochloris marina (strain MBIC 11017), this protein is Ribosome maturation factor RimP.